Reading from the N-terminus, the 324-residue chain is MSLYMLVSTFAVAFIITVIGVPLFIPFLVKLKFGQSIRDEGPKMHEKKSGTPTMGAVVFITAMLISFLIFSFISGEVSAATWLLFIALALFGALGFLDDYIKVVQKRNLGLTSKQKFLGQVAISILFYLVYHLNGFAETLNIPFTNIEVDLGWFFVIFILFWLVGFSNAVNLTDGLDGLVSGLSVIAFSAFGVIAFYQEQMDVAIFCFAIVGGMLGFLLFNKNPAKIFMGDTGSLALGGSIAAISILVHQEWLLLLIGIIFVIETASVILQVFYFKATGGKRIFRMTPIHHHFELGGWSEWRVVLTFWGIGLIGAIISVCVVIF.

10 consecutive transmembrane segments (helical) span residues 9–29 (TFAV…PFLV), 53–73 (TMGA…FSFI), 77–97 (VSAA…LGFL), 117–137 (FLGQ…NGFA), 147–167 (IEVD…VGFS), 176–196 (LDGL…VIAF), 201–221 (MDVA…LLFN), 227–247 (IFMG…ISIL), 253–273 (LLLL…LQVF), and 304–324 (VLTF…VVIF).

It belongs to the glycosyltransferase 4 family. MraY subfamily. Mg(2+) is required as a cofactor.

The protein resides in the cell membrane. It carries out the reaction UDP-N-acetyl-alpha-D-muramoyl-L-alanyl-gamma-D-glutamyl-meso-2,6-diaminopimeloyl-D-alanyl-D-alanine + di-trans,octa-cis-undecaprenyl phosphate = di-trans,octa-cis-undecaprenyl diphospho-N-acetyl-alpha-D-muramoyl-L-alanyl-D-glutamyl-meso-2,6-diaminopimeloyl-D-alanyl-D-alanine + UMP. It functions in the pathway cell wall biogenesis; peptidoglycan biosynthesis. Functionally, catalyzes the initial step of the lipid cycle reactions in the biosynthesis of the cell wall peptidoglycan: transfers peptidoglycan precursor phospho-MurNAc-pentapeptide from UDP-MurNAc-pentapeptide onto the lipid carrier undecaprenyl phosphate, yielding undecaprenyl-pyrophosphoryl-MurNAc-pentapeptide, known as lipid I. This Listeria monocytogenes serotype 4b (strain CLIP80459) protein is Phospho-N-acetylmuramoyl-pentapeptide-transferase.